Here is a 65-residue protein sequence, read N- to C-terminus: Putative cytochrome c oxidase subunit 5C-4 (65 aa).

A helical transmembrane segment spans residues Glu-20–Met-37.

It belongs to the cytochrome c oxidase subunit 5C family.

It is found in the mitochondrion inner membrane. In terms of biological role, this protein is one of the nuclear-coded polypeptide chains of cytochrome c oxidase, the terminal oxidase in mitochondrial electron transport. The sequence is that of Putative cytochrome c oxidase subunit 5C-4 from Arabidopsis thaliana (Mouse-ear cress).